Here is a 289-residue protein sequence, read N- to C-terminus: CRISPR system Cms protein Csm4 (289 aa).

This sequence belongs to the CRISPR-associated Csm4 family. Probably part of the Csm effector complex, that includes Cas10, Csm2, Csm3, Csm4, Csm5 and mature crRNA. Interacts with Cas10 (csm1).

Its function is as follows. CRISPR (clustered regularly interspaced short palindromic repeat) is an adaptive immune system that provides protection against mobile genetic elements (viruses, transposable elements and conjugative plasmids). CRISPR clusters contain spacers, sequences complementary to antecedent mobile elements, and target invading nucleic acids. CRISPR clusters are transcribed and processed into CRISPR RNA (crRNA). The type III-A Csm effector complex binds crRNA and acts as a crRNA-guided RNase, DNase and cyclic oligoadenylate synthase; binding of target RNA cognate to the crRNA is required for all activities. In terms of biological role, the subunit probably binds to the 5' handle of the crRNA, helping in discrimination between self- and non-self. This Thermococcus onnurineus (strain NA1) protein is CRISPR system Cms protein Csm4.